A 968-amino-acid polypeptide reads, in one-letter code: RNA polymerase-associated protein RapA (968 aa).

The region spanning 164 to 334 (DVGRRHAPRV…FARLRLLDPD (171 aa)) is the Helicase ATP-binding domain. An ATP-binding site is contributed by 177–184 (DEVGLGKT). A DEAH box motif is present at residues 280-283 (DEAH). Positions 490–643 (RVEWLMGYLT…HTCPTGRAVY (154 aa)) constitute a Helicase C-terminal domain.

It belongs to the SNF2/RAD54 helicase family. RapA subfamily. In terms of assembly, interacts with the RNAP. Has a higher affinity for the core RNAP than for the holoenzyme. Its ATPase activity is stimulated by binding to RNAP.

In terms of biological role, transcription regulator that activates transcription by stimulating RNA polymerase (RNAP) recycling in case of stress conditions such as supercoiled DNA or high salt concentrations. Probably acts by releasing the RNAP, when it is trapped or immobilized on tightly supercoiled DNA. Does not activate transcription on linear DNA. Probably not involved in DNA repair. The protein is RNA polymerase-associated protein RapA of Erwinia tasmaniensis (strain DSM 17950 / CFBP 7177 / CIP 109463 / NCPPB 4357 / Et1/99).